A 368-amino-acid polypeptide reads, in one-letter code: Phosphoserine aminotransferase (368 aa).

Arg42 serves as a coordination point for L-glutamate. Positions 101, 151, 175, and 198 each coordinate pyridoxal 5'-phosphate. Lys199 is subject to N6-(pyridoxal phosphate)lysine. Residue 240–241 coordinates pyridoxal 5'-phosphate; the sequence is NT.

It belongs to the class-V pyridoxal-phosphate-dependent aminotransferase family. SerC subfamily. Homodimer. Pyridoxal 5'-phosphate is required as a cofactor.

The protein localises to the cytoplasm. The catalysed reaction is O-phospho-L-serine + 2-oxoglutarate = 3-phosphooxypyruvate + L-glutamate. It catalyses the reaction 4-(phosphooxy)-L-threonine + 2-oxoglutarate = (R)-3-hydroxy-2-oxo-4-phosphooxybutanoate + L-glutamate. It participates in amino-acid biosynthesis; L-serine biosynthesis; L-serine from 3-phospho-D-glycerate: step 2/3. The protein operates within cofactor biosynthesis; pyridoxine 5'-phosphate biosynthesis; pyridoxine 5'-phosphate from D-erythrose 4-phosphate: step 3/5. Functionally, catalyzes the reversible conversion of 3-phosphohydroxypyruvate to phosphoserine and of 3-hydroxy-2-oxo-4-phosphonooxybutanoate to phosphohydroxythreonine. This chain is Phosphoserine aminotransferase, found in Polaromonas sp. (strain JS666 / ATCC BAA-500).